The primary structure comprises 643 residues: Phosphomethylpyrimidine synthase (643 aa).

Substrate contacts are provided by residues Asn-248, Met-277, Tyr-306, His-342, 362–364 (SRG), 403–406 (DGLR), and Glu-442. His-446 contacts Zn(2+). Residue Tyr-469 coordinates substrate. His-510 provides a ligand contact to Zn(2+). 3 residues coordinate [4Fe-4S] cluster: Cys-590, Cys-593, and Cys-598.

It belongs to the ThiC family. Homodimer. [4Fe-4S] cluster is required as a cofactor.

It catalyses the reaction 5-amino-1-(5-phospho-beta-D-ribosyl)imidazole + S-adenosyl-L-methionine = 4-amino-2-methyl-5-(phosphooxymethyl)pyrimidine + CO + 5'-deoxyadenosine + formate + L-methionine + 3 H(+). It functions in the pathway cofactor biosynthesis; thiamine diphosphate biosynthesis. Catalyzes the synthesis of the hydroxymethylpyrimidine phosphate (HMP-P) moiety of thiamine from aminoimidazole ribotide (AIR) in a radical S-adenosyl-L-methionine (SAM)-dependent reaction. The protein is Phosphomethylpyrimidine synthase of Burkholderia cenocepacia (strain ATCC BAA-245 / DSM 16553 / LMG 16656 / NCTC 13227 / J2315 / CF5610) (Burkholderia cepacia (strain J2315)).